The sequence spans 238 residues: uncharacterized protein (238 aa).

Disordered stretches follow at residues 123–167 (FRQG…VHGG) and 180–238 (SAMG…AKRR). Low complexity predominate over residues 152–161 (SGHSPSPGRH). The span at 207–238 (HRGHGHRFRLLAPRSRPRQRRGGGSRAAAKRR) shows a compositional bias: basic residues.

The protein belongs to the PNP/MTAP phosphorylase family.

This is an uncharacterized protein from Rhodospirillum rubrum.